A 533-amino-acid chain; its full sequence is Bifunctional purine biosynthesis protein PurH (533 aa).

An MGS-like domain is found at 1–148 (MQPNRPIRQA…KNHQDVAIVV (148 aa)).

Belongs to the PurH family.

It catalyses the reaction (6R)-10-formyltetrahydrofolate + 5-amino-1-(5-phospho-beta-D-ribosyl)imidazole-4-carboxamide = 5-formamido-1-(5-phospho-D-ribosyl)imidazole-4-carboxamide + (6S)-5,6,7,8-tetrahydrofolate. The enzyme catalyses IMP + H2O = 5-formamido-1-(5-phospho-D-ribosyl)imidazole-4-carboxamide. The protein operates within purine metabolism; IMP biosynthesis via de novo pathway; 5-formamido-1-(5-phospho-D-ribosyl)imidazole-4-carboxamide from 5-amino-1-(5-phospho-D-ribosyl)imidazole-4-carboxamide (10-formyl THF route): step 1/1. It functions in the pathway purine metabolism; IMP biosynthesis via de novo pathway; IMP from 5-formamido-1-(5-phospho-D-ribosyl)imidazole-4-carboxamide: step 1/1. This Pasteurella multocida (strain Pm70) protein is Bifunctional purine biosynthesis protein PurH.